The following is a 298-amino-acid chain: 4-hydroxy-tetrahydrodipicolinate synthase (298 aa).

Threonine 48 lines the pyruvate pocket. The Proton donor/acceptor role is filled by tyrosine 137. The Schiff-base intermediate with substrate role is filled by lysine 166. Residue isoleucine 207 participates in pyruvate binding.

It belongs to the DapA family. Homotetramer; dimer of dimers.

It localises to the cytoplasm. It carries out the reaction L-aspartate 4-semialdehyde + pyruvate = (2S,4S)-4-hydroxy-2,3,4,5-tetrahydrodipicolinate + H2O + H(+). It functions in the pathway amino-acid biosynthesis; L-lysine biosynthesis via DAP pathway; (S)-tetrahydrodipicolinate from L-aspartate: step 3/4. Functionally, catalyzes the condensation of (S)-aspartate-beta-semialdehyde [(S)-ASA] and pyruvate to 4-hydroxy-tetrahydrodipicolinate (HTPA). The polypeptide is 4-hydroxy-tetrahydrodipicolinate synthase (Campylobacter lari (strain RM2100 / D67 / ATCC BAA-1060)).